A 495-amino-acid polypeptide reads, in one-letter code: Probable leucine aminopeptidase 2 (495 aa).

An N-terminal signal peptide occupies residues Met-1 to Gly-21. Positions Met-130–Thr-216 constitute a PA domain. N-linked (GlcNAc...) asparagine glycans are attached at residues Asn-142 and Asn-235. His-259 and Asp-271 together coordinate Zn(2+). Residue Asn-272 is glycosylated (N-linked (GlcNAc...) asparagine). Glu-303 acts as the Proton acceptor in catalysis. Residues Glu-304 and Asp-332 each contribute to the Zn(2+) site. Asn-352 is a glycosylation site (N-linked (GlcNAc...) asparagine). His-430 lines the Zn(2+) pocket.

Belongs to the peptidase M28 family. M28A subfamily. Monomer. It depends on Zn(2+) as a cofactor.

Its subcellular location is the secreted. In terms of biological role, extracellular aminopeptidase that releases a wide variety of amino acids from natural peptides and contributes to pathogenicity. This chain is Probable leucine aminopeptidase 2 (LAP2), found in Trichophyton verrucosum (strain HKI 0517).